A 389-amino-acid polypeptide reads, in one-letter code: DEAD-box ATP-dependent RNA helicase CshC (389 aa).

A Q motif motif is present at residues 1–26 (MIKDMQPFLQQAWEKAGFKELTEIQK). In terms of domain architecture, Helicase ATP-binding spans 29–199 (IPTILEGQDV…RDLAVEPQLV (171 aa)). 42 to 49 (SPTGTGKT) provides a ligand contact to ATP. The short motif at 147–150 (DEFD) is the DEAD box element. The region spanning 209 to 379 (LVEHTYIICE…TKPKAPKKKK (171 aa)) is the Helicase C-terminal domain. The interval 368-389 (VETKPKAPKKKKPAFTGKKKPR) is disordered. A compositionally biased stretch (basic residues) spans 373–389 (KAPKKKKPAFTGKKKPR).

The enzyme catalyses ATP + H2O = ADP + phosphate + H(+). Its function is as follows. DEAD-box RNA helicase. Probably has an RNA-dependent ATPase activity and a 3' to 5' RNA helicase activity that uses the energy of ATP hydrolysis to destabilize and unwind short RNA duplexes. The polypeptide is DEAD-box ATP-dependent RNA helicase CshC (cshC) (Bacillus cereus (strain ATCC 14579 / DSM 31 / CCUG 7414 / JCM 2152 / NBRC 15305 / NCIMB 9373 / NCTC 2599 / NRRL B-3711)).